We begin with the raw amino-acid sequence, 452 residues long: GTPase Der (452 aa).

EngA-type G domains lie at 9 to 170 (KIIA…PEED) and 185 to 362 (LQIV…KTWN). Residues 15 to 22 (GRPNVGKS), 62 to 66 (DTPGF), 124 to 127 (NKCE), 191 to 198 (GRPNAGKS), 238 to 242 (DTAGL), and 303 to 306 (NKWD) each bind GTP. In terms of domain architecture, KH-like spans 363-448 (KKITTSKLNE…PIRFNYIKTK (86 aa)).

This sequence belongs to the TRAFAC class TrmE-Era-EngA-EngB-Septin-like GTPase superfamily. EngA (Der) GTPase family. In terms of assembly, associates with the 50S ribosomal subunit.

In terms of biological role, GTPase that plays an essential role in the late steps of ribosome biogenesis. This Rickettsia bellii (strain OSU 85-389) protein is GTPase Der.